Here is a 239-residue protein sequence, read N- to C-terminus: Ribonuclease PH (239 aa).

Phosphate contacts are provided by residues Arg-86 and 124-126; that span reads GTR.

This sequence belongs to the RNase PH family. As to quaternary structure, homohexameric ring arranged as a trimer of dimers.

It catalyses the reaction tRNA(n+1) + phosphate = tRNA(n) + a ribonucleoside 5'-diphosphate. In terms of biological role, phosphorolytic 3'-5' exoribonuclease that plays an important role in tRNA 3'-end maturation. Removes nucleotide residues following the 3'-CCA terminus of tRNAs; can also add nucleotides to the ends of RNA molecules by using nucleoside diphosphates as substrates, but this may not be physiologically important. Probably plays a role in initiation of 16S rRNA degradation (leading to ribosome degradation) during starvation. This is Ribonuclease PH from Rhizobium etli (strain CIAT 652).